We begin with the raw amino-acid sequence, 360 residues long: Methylthioribose-1-phosphate isomerase (360 aa).

Asp252 acts as the Proton donor in catalysis.

It belongs to the eIF-2B alpha/beta/delta subunits family. MtnA subfamily.

The protein localises to the cytoplasm. It is found in the nucleus. The enzyme catalyses 5-(methylsulfanyl)-alpha-D-ribose 1-phosphate = 5-(methylsulfanyl)-D-ribulose 1-phosphate. Its pathway is amino-acid biosynthesis; L-methionine biosynthesis via salvage pathway; L-methionine from S-methyl-5-thio-alpha-D-ribose 1-phosphate: step 1/6. In terms of biological role, catalyzes the interconversion of methylthioribose-1-phosphate (MTR-1-P) into methylthioribulose-1-phosphate (MTRu-1-P). The sequence is that of Methylthioribose-1-phosphate isomerase from Trichoplax adhaerens (Trichoplax reptans).